A 360-amino-acid polypeptide reads, in one-letter code: Heat-inducible transcription repressor HrcA (360 aa).

Belongs to the HrcA family.

Its function is as follows. Negative regulator of class I heat shock genes (grpE-dnaK-dnaJ and groELS operons). Prevents heat-shock induction of these operons. The chain is Heat-inducible transcription repressor HrcA from Streptococcus thermophilus (strain CNRZ 1066).